Reading from the N-terminus, the 2138-residue chain is Protein virilizer homolog (2138 aa).

Disordered regions lie at residues 1503–1574, 1638–1664, 1855–1881, 2013–2035, and 2058–2094; these read RLPQ…SMHV, NPTP…DDLQ, PVIP…SSGG, PMQP…QGVS, and YYHP…QESG. The segment covering 1528-1541 has biased composition (polar residues); the sequence is ENSSVDIPTQNSIQ. Composition is skewed to polar residues over residues 1862–1881 and 2025–2035; these read DSLS…SSGG and QISQPSEQGVS.

It belongs to the vir family. Interacts with MTB, FIP37 and HAKAI. Associates with MTA, MTB, FIP37 and HAKAI to form the m6A writer complex which is essential for adenosine methylation at specific mRNA sequences.

Its subcellular location is the nucleus speckle. It localises to the nucleus. The protein resides in the nucleoplasm. Its function is as follows. Subunit of the N6-methyltransferase complex, a multiprotein complex that mediates N6-methyladenosine (m6A) methylation at the 5'-[AG]GAC-3' consensus sites of some mRNAs. Associates with MTA, MTB, FIP37 and HAKAI to form the m6A writer complex which is essential for adenosine methylation at specific mRNA sequences. N6-methyladenosine (m6A) plays a role in mRNA stability, processing, translation efficiency and editing. In Arabidopsis thaliana (Mouse-ear cress), this protein is Protein virilizer homolog.